The primary structure comprises 760 residues: Xaa-Pro dipeptidyl-peptidase (760 aa).

Active-site charge relay system residues include Ser349, Asp469, and His499.

The protein belongs to the peptidase S15 family. In terms of assembly, homodimer.

Its subcellular location is the cytoplasm. The catalysed reaction is Hydrolyzes Xaa-Pro-|- bonds to release unblocked, N-terminal dipeptides from substrates including Ala-Pro-|-p-nitroanilide and (sequentially) Tyr-Pro-|-Phe-Pro-|-Gly-Pro-|-Ile.. Functionally, removes N-terminal dipeptides sequentially from polypeptides having unsubstituted N-termini provided that the penultimate residue is proline. This Streptococcus pyogenes serotype M49 (strain NZ131) protein is Xaa-Pro dipeptidyl-peptidase.